Reading from the N-terminus, the 344-residue chain is MDENRSKALAAALSQIEKQFGKGSIMRMGDTDVAADIQAVSTGSLGLDIALGIGGLPRGRIVEIYGPESSGKTTLTLSVIAQMQKLGGTAAFIDAEHALDPVYAQKLGVNVSDLLISQPDTGEQALEIADMLVRSGSVDVVVVDSVAALTPKAEIEGEMGDSHMGLQARLMSQALRKLTANIKRTNTLVIFINQIRMKIGVMFGNPETTTGGNALKFYASVRLDIRRTGAIKKGDEVTGSETRVKVVKNKVAPPFKQAEFDILYGEGISREGEIIELGVNLKLIEKAGAWYSYKGEKIGQGKDNAREFLREHPEIANEIDAKIREHSNLANAAMTTAPDEESDE.

ATP is bound at residue 66–73; it reads GPESSGKT.

This sequence belongs to the RecA family.

The protein resides in the cytoplasm. Its function is as follows. Can catalyze the hydrolysis of ATP in the presence of single-stranded DNA, the ATP-dependent uptake of single-stranded DNA by duplex DNA, and the ATP-dependent hybridization of homologous single-stranded DNAs. It interacts with LexA causing its activation and leading to its autocatalytic cleavage. The sequence is that of Protein RecA from Methylobacillus flagellatus (strain ATCC 51484 / DSM 6875 / VKM B-1610 / KT).